The chain runs to 341 residues: Phenylalanine--tRNA ligase alpha subunit (341 aa).

Glu-256 provides a ligand contact to Mg(2+).

It belongs to the class-II aminoacyl-tRNA synthetase family. Phe-tRNA synthetase alpha subunit type 1 subfamily. As to quaternary structure, tetramer of two alpha and two beta subunits. It depends on Mg(2+) as a cofactor.

It is found in the cytoplasm. It carries out the reaction tRNA(Phe) + L-phenylalanine + ATP = L-phenylalanyl-tRNA(Phe) + AMP + diphosphate + H(+). This is Phenylalanine--tRNA ligase alpha subunit from Clostridium perfringens (strain 13 / Type A).